Here is a 237-residue protein sequence, read N- to C-terminus: MTPQAFYLALEQAGFALTNHQKEQFDTYFKLLVDWNRKINLTAITEENEVYLKHFYDSVAPLLQGYIPNEPLRLLDIGAGAGFPSIPMKIMFPKLDVTIIDSLNKRIHFLQLLAKELGLEGVHFYHGRAEDFGQDKQFRGQFDLVTARAVARMQILSELTIPFLKIKGKLIALKAQAADQELEEAKKALQLLFAKVLDHQPYQLPNGDGRYITLVEKKKETPNKYPRKAGIPNKKPL.

S-adenosyl-L-methionine-binding positions include Gly78, Phe83, 129-130 (AE), and Arg148.

This sequence belongs to the methyltransferase superfamily. RNA methyltransferase RsmG family.

The protein localises to the cytoplasm. Specifically methylates the N7 position of a guanine in 16S rRNA. This is Ribosomal RNA small subunit methyltransferase G from Streptococcus equi subsp. zooepidemicus (strain MGCS10565).